Here is a 185-residue protein sequence, read N- to C-terminus: Elongation factor P (185 aa).

It belongs to the elongation factor P family.

It localises to the cytoplasm. It functions in the pathway protein biosynthesis; polypeptide chain elongation. Its function is as follows. Involved in peptide bond synthesis. Stimulates efficient translation and peptide-bond synthesis on native or reconstituted 70S ribosomes in vitro. Probably functions indirectly by altering the affinity of the ribosome for aminoacyl-tRNA, thus increasing their reactivity as acceptors for peptidyl transferase. In Caldanaerobacter subterraneus subsp. tengcongensis (strain DSM 15242 / JCM 11007 / NBRC 100824 / MB4) (Thermoanaerobacter tengcongensis), this protein is Elongation factor P.